A 210-amino-acid polypeptide reads, in one-letter code: MTNYFESPFKGKLLTEQVKNPNIKVGRYSYYSGYYHGHSFDDCARYLLPDRDDVDQLIIGSFCSIGSGAAFIMAGNQGHRYDWVSSFPFFYMNEEPAFAKSVDAFQRAGDTVIGSDVWIGSEAMIMPGIKIGHGAVIGSRALVAKDVEPYTIVGGNPAKSIRKRFSEEEISMLLDMAWWDWPLEQIKEAMPFLCSSGIASLYRRWQGTSA.

His-79 is a catalytic residue.

Belongs to the transferase hexapeptide repeat family.

It carries out the reaction chloramphenicol + acetyl-CoA = chloramphenicol 3-acetate + CoA. This enzyme is an effector of chloramphenicol resistance in bacteria. The chain is Chloramphenicol acetyltransferase (catB2) from Escherichia coli.